A 147-amino-acid polypeptide reads, in one-letter code: UPF0178 protein VIBHAR_03247 (147 aa).

The protein belongs to the UPF0178 family.

In Vibrio campbellii (strain ATCC BAA-1116), this protein is UPF0178 protein VIBHAR_03247.